Reading from the N-terminus, the 244-residue chain is 5-oxoprolinase subunit A (244 aa).

Belongs to the LamB/PxpA family. In terms of assembly, forms a complex composed of PxpA, PxpB and PxpC.

It carries out the reaction 5-oxo-L-proline + ATP + 2 H2O = L-glutamate + ADP + phosphate + H(+). Catalyzes the cleavage of 5-oxoproline to form L-glutamate coupled to the hydrolysis of ATP to ADP and inorganic phosphate. The polypeptide is 5-oxoprolinase subunit A (Escherichia fergusonii (strain ATCC 35469 / DSM 13698 / CCUG 18766 / IAM 14443 / JCM 21226 / LMG 7866 / NBRC 102419 / NCTC 12128 / CDC 0568-73)).